The sequence spans 118 residues: Large ribosomal subunit protein bL20 (118 aa).

This sequence belongs to the bacterial ribosomal protein bL20 family.

Its function is as follows. Binds directly to 23S ribosomal RNA and is necessary for the in vitro assembly process of the 50S ribosomal subunit. It is not involved in the protein synthesizing functions of that subunit. In Pseudomonas fluorescens (strain SBW25), this protein is Large ribosomal subunit protein bL20.